Reading from the N-terminus, the 472-residue chain is MPIQQLPMMKGMGKDFKNADYIDYLPVNMLATPKEILNSSGYLRSFPGITKRYDMNGVSRGVEYNTAQNAVYRVCGGKLYKGESEVGDVAGSGRVSMAHGRTSQAVGVNGQLVEYRYDGTVKTVSNWPADSGFTQYELGSVRDITRLRGRYAWSKDGTDSWFITDLEDESHPDRYSAQYRAESQPDGIIGIGTWRDFIVCFGSSTIEYFSLTGATTAGAALYVAQPSLMVQKGIAGTYCKTPFADSYAFISHPATGAPSVYIIGSGQASPIATASIEKIIRSYTAEEMATGVMETLRFDSHELLIIHLPRHVLVYDASSSQNGPQWCVLKTGLYDDVYRGVDFMYEGNQITCGDKSEAVVGQLQFDISSQYDKQQEHLLFTPLFKADNARCFDLEVESSTGVAQYADRLFLSATTDGINYGREQMIEQNEPFVYDKRVLWKRVGRIRRLIGFKLRVITKSPVTLSGCQIRLE.

As to quaternary structure, monomer (in solution). Hexamer; assembles as a hexamer onto the dodecamer formed by the head-to-tail adapter gp4. Interacts with the head-to-tail adapter protein gp4; each gp10 monomer contacts 2 head-to-tail adapter protein gp4. Interacts with the tail needle protein gp26. Interacts with the tail spike protein gp9; binds six tail spike trimers.

It is found in the virion. In terms of biological role, acts as a tail hub by assembling onto the head-to-tail adapter protein gp4, generating a channel that is sealed by the tail needle protein gp26. Together with gp4 and gp26, gp10 is required for stabilization of the condensed DNA within the capsid; perhaps by plugging the hole through which the DNA enters. The chain is Tail hub protein gp10 (10) from Salmonella phage P22 (Bacteriophage P22).